The primary structure comprises 256 residues: MLDHLEIAGRNFSSRLIVGTGKYKNFDETVKAIEASGAEVVTVALKRVNITDNKRESLQDYLDPKKYTYLPNTAFCFTAGEAVRHLALAREIGGWNLVKVEVFSEKEFLYPDMRETLKAVKILAGEGFHVMPYCNDDPIMCKRLEESGAVAIMPLAAPIGSGLGIQNLFNLKVIVKQSSVPVIVDAGVGTPSDAVIAMEAGCDGVLINTSIAKARFPVQMAKAMKHAVRAGRLGYLAGRMLPQQFASPSSNSSGIV.

Lysine 99 (schiff-base intermediate with DXP) is an active-site residue. Residues glycine 160, 186–187 (AG), and 208–209 (NT) contribute to the 1-deoxy-D-xylulose 5-phosphate site.

The protein belongs to the ThiG family. In terms of assembly, homotetramer. Forms heterodimers with either ThiH or ThiS.

The protein resides in the cytoplasm. The enzyme catalyses [ThiS sulfur-carrier protein]-C-terminal-Gly-aminoethanethioate + 2-iminoacetate + 1-deoxy-D-xylulose 5-phosphate = [ThiS sulfur-carrier protein]-C-terminal Gly-Gly + 2-[(2R,5Z)-2-carboxy-4-methylthiazol-5(2H)-ylidene]ethyl phosphate + 2 H2O + H(+). Its pathway is cofactor biosynthesis; thiamine diphosphate biosynthesis. Catalyzes the rearrangement of 1-deoxy-D-xylulose 5-phosphate (DXP) to produce the thiazole phosphate moiety of thiamine. Sulfur is provided by the thiocarboxylate moiety of the carrier protein ThiS. In vitro, sulfur can be provided by H(2)S. This is Thiazole synthase from Neorickettsia sennetsu (strain ATCC VR-367 / Miyayama) (Ehrlichia sennetsu).